Here is a 928-residue protein sequence, read N- to C-terminus: 2-oxoglutarate dehydrogenase E1 component (928 aa).

It belongs to the alpha-ketoglutarate dehydrogenase family. As to quaternary structure, homodimer. Part of the 2-oxoglutarate dehydrogenase (OGDH) complex composed of E1 (2-oxoglutarate dehydrogenase), E2 (dihydrolipoamide succinyltransferase) and E3 (dihydrolipoamide dehydrogenase); the complex contains multiple copies of the three enzymatic components (E1, E2 and E3). Thiamine diphosphate serves as cofactor.

The enzyme catalyses N(6)-[(R)-lipoyl]-L-lysyl-[protein] + 2-oxoglutarate + H(+) = N(6)-[(R)-S(8)-succinyldihydrolipoyl]-L-lysyl-[protein] + CO2. Functionally, E1 component of the 2-oxoglutarate dehydrogenase (OGDH) complex which catalyzes the decarboxylation of 2-oxoglutarate, the first step in the conversion of 2-oxoglutarate to succinyl-CoA and CO(2). The polypeptide is 2-oxoglutarate dehydrogenase E1 component (sucA) (Rickettsia conorii (strain ATCC VR-613 / Malish 7)).